We begin with the raw amino-acid sequence, 103 residues long: Small ribosomal subunit protein uS10 (103 aa).

It belongs to the universal ribosomal protein uS10 family. As to quaternary structure, part of the 30S ribosomal subunit.

Functionally, involved in the binding of tRNA to the ribosomes. This Neisseria gonorrhoeae protein is Small ribosomal subunit protein uS10.